The chain runs to 953 residues: MEESSSVAMLLPDIGEQEAILTAESIISPSLEIDEQRKTKPDPLIHVIQKLSKIVENEKSQKCPLIGKKRPHSSAATHSLETQELCEIPAKVTQSPAAVTRRAEMSQTNFTPDTLAQNEGKAMSYQCSLCKFLSSSFSVLKDHIKQHGQQNEVILMCSECHITSRSQEELEAHVVNDHDNDANIHTQSKAQQCVSPSSSLCRKTTERNETVPDIPVSVDNLQTHTVQTASVAEMGRRKWYAYEQYGMYRCLFCSYTCGQQRMLKTHAWKHAGEVDCSYPIFENENEPLGLLDSSAAAAPGGVDAVVIAIGDSELSIHNGPSVQVQICSSEQLSSSSPLEQSAERGVHLSQSVTLDPNEEEMLEVISDAEENLIPDSLLTSAQKIISSSPNKKGHVNVIVERLPSAEETLSQKRFLMNTEMEEGKDLSPTEAQIGREGTDDVYRADKCTVDIGGLIIGWSSSEKKDELMNKGLATDENAPPGRRRTNSESLRLHSLAAEALVTMPIRAAELTRANLGHYGDINLLGPDTSQRQVDSTLAAYSKMMSPLKNSSDGLTSLNQSNSTLVALPEGRQELSDGQVKTGISMSLLTVIEKLRERTDQNASDDDILKELQDNAQCQPNSDTSLSGNNVVEYIPNAERPYRCRLCHYTSGNKGYIKQHLRVHRQRQPYQCPICEHIADNSKDLESHMIHHCKTRIYQCKQCEESFHYKSQLRNHEREQHSLPDTLSIATSNEPRISSDTADGKCVQEGNKSSVQKQYRCDVCDYTSTTYVGVRNHRRIHNSDKPYRCSLCGYVCSHPPSLKSHMWKHASDQNYNYEQVNKAINDAISQSGRVLGKTPGKTQLKSSEDSADPITGSSENAVSSSELMSQTPSEVLGTNENEKLSPTSNTSYSLEKISSLAPPSMEYCVLLFCCCICGFESTSKENLLDHMKEHEGEIVNIILNKDHNTALNTN.

Serine 95 is modified (phosphoserine). 3 consecutive C2H2-type zinc fingers follow at residues tyrosine 125–histidine 147, leucine 155–histidine 185, and tyrosine 248–histidine 270. Phosphoserine is present on serine 427. The interval lysine 470–serine 489 is disordered. 5 C2H2-type zinc fingers span residues tyrosine 641–histidine 663, tyrosine 669–histidine 691, tyrosine 697–histidine 720, tyrosine 758–histidine 780, and tyrosine 786–histidine 808. The disordered stretch occupies residues glycine 831 to tyrosine 891. Positions threonine 854 to tyrosine 891 are enriched in polar residues. The segment at phenylalanine 911–histidine 933 adopts a C2H2-type 9 zinc-finger fold.

This sequence belongs to the krueppel C2H2-type zinc-finger protein family.

It is found in the nucleus. Functionally, may be involved in transcriptional regulation. In Pongo abelii (Sumatran orangutan), this protein is Zinc finger protein 507 (ZNF507).